The following is a 256-amino-acid chain: DNA repair protein RecO (256 aa).

It belongs to the RecO family.

In terms of biological role, involved in DNA repair and RecF pathway recombination. The chain is DNA repair protein RecO from Bacillus pumilus (strain SAFR-032).